Reading from the N-terminus, the 55-residue chain is Large ribosomal subunit protein bL33 (55 aa).

The protein belongs to the bacterial ribosomal protein bL33 family.

This is Large ribosomal subunit protein bL33 from Escherichia coli (strain K12 / DH10B).